Consider the following 146-residue polypeptide: Ninjurin-1 (146 aa).

Positions 1–33 are disordered; sequence MASEAMELNGGVNRRDDPGARPQQGRMSRNTPL. The Extracellular segment spans residues 1–75; it reads MASEAMELNG…ELGPSFSFYI (75 aa). The tract at residues 37–66 is required to induce plasma membrane rupture; sequence HYANKKSAAESMLDIALLMANASQLKTVLE. The tract at residues 41-52 is helix alpha1; sequence KKSAAESMLDIA. The helix alpha2 stretch occupies residues 55–71; that stretch reads MANASQLKTVLELGPSF. An N-linked (GlcNAc...) asparagine glycan is attached at Asn57. Residues 76-100 form a helical membrane-spanning segment; that stretch reads PLITLISISLTLQIIVGILLIFIVK. Topologically, residues 101–110 are cytoplasmic; that stretch reads WNLNDSSKHY. The chain crosses the membrane as a helical span at residues 111–135; sequence ILNLLENIVTALVFIVVVVNVFITA. The Extracellular portion of the chain corresponds to 136 to 146; it reads FGVQRPDDKTS.

The protein belongs to the ninjurin family. In terms of assembly, homooligomer; in response to death stimuli, homooligomerizes into long, highly branched filaments and large, ring-shaped structures in the membrane. Homodimer; in absence of death stimuli, forms an inactive homodimer. Homooligomer; in response to death stimuli, homooligomerizes into long, highly branched filaments and large, ring-shaped structures in the membrane.

It is found in the cell membrane. Its subcellular location is the synaptic cell membrane. In normal conditions, NINJ1 is inactivated. In response to death stimuli, homooligomerizes and disrupts membrane integrity by introducing the hydrophilic faces of alpha1 and alpha2 helices into the hydrophobic membrane. Homooligomerization and ability to mediate plasma membrane rupture is inhibited by glycine; it is unclear whether glycine directly or indirectly inhibits homooligomerization. With respect to regulation, in response to death stimuli, homooligomerizes and disrupts membrane integrity by introducing the hydrophilic faces of alpha1 and alpha2 helices into the hydrophobic membrane. Homooligomerization and ability to mediate plasma membrane rupture is inhibited by glycine; it is unclear whether glycine directly or indirectly inhibits homooligomerization. In normal conditions, NINJ1 is autoinhibited via formation of a homodimer: in the inactive homodimer, the alpha1 and alpha2 helices (residues 41-71) form a single transmembrane region without a kink, in which hydrophilic faces of alpha1 and alpha2 helices are sequestered. Effector of various programmed cell death, such as pyroptosis and necroptosis, which mediates plasma membrane rupture (cytolysis). Oligomerizes in response to death stimuli and forms ring-like structures on the plasma membrane: acts by cutting and shedding membrane disks, like a cookie cutter, leading to membrane damage and loss that cannot be repaired by the cell. Plasma membrane rupture leads to release intracellular molecules named damage-associated molecular patterns (DAMPs) that propagate the inflammatory response. Mechanistically, mediates plasma membrane rupture by introducing hydrophilic faces of 2 alpha helices into the hydrophobic membrane. Induces plasma membrane rupture downstream of Gasdermin (GSDMA, GSDMB, GSDMC, GSDMD, or GSDME) or MLKL during pyroptosis or necroptosis, respectively. Also acts as an effector of PANoptosis and ferroptosis. Induces plasma membrane rupture in response to cell swelling caused by osmotic stress. Acts as a regulator of Toll-like receptor 4 (TLR4) signaling triggered by lipopolysaccharide (LPS) during systemic inflammation; directly binds LPS. Involved in leukocyte migration during inflammation by promoting transendothelial migration of macrophages via homotypic binding. Promotes the migration of monocytes across the brain endothelium to central nervous system inflammatory lesions. Also acts as a homophilic transmembrane adhesion molecule involved in various processes such as axonal growth, cell chemotaxis and angiogenesis. Promotes cell adhesion by mediating homophilic interactions via its extracellular N-terminal adhesion motif (N-NAM). Also involved in striated muscle growth and differentiation. The protein is Ninjurin-1 of Danio rerio (Zebrafish).